Reading from the N-terminus, the 196-residue chain is ATP-dependent Clp protease proteolytic subunit (196 aa).

Catalysis depends on S101, which acts as the Nucleophile. The active site involves H126.

It belongs to the peptidase S14 family. Component of the chloroplastic Clp protease core complex.

The protein resides in the plastid. Its subcellular location is the chloroplast stroma. The enzyme catalyses Hydrolysis of proteins to small peptides in the presence of ATP and magnesium. alpha-casein is the usual test substrate. In the absence of ATP, only oligopeptides shorter than five residues are hydrolyzed (such as succinyl-Leu-Tyr-|-NHMec, and Leu-Tyr-Leu-|-Tyr-Trp, in which cleavage of the -Tyr-|-Leu- and -Tyr-|-Trp bonds also occurs).. In terms of biological role, cleaves peptides in various proteins in a process that requires ATP hydrolysis. Has a chymotrypsin-like activity. Plays a major role in the degradation of misfolded proteins. This chain is ATP-dependent Clp protease proteolytic subunit, found in Coffea arabica (Arabian coffee).